A 143-amino-acid polypeptide reads, in one-letter code: Large ribosomal subunit protein uL11 (143 aa).

Belongs to the universal ribosomal protein uL11 family. As to quaternary structure, part of the ribosomal stalk of the 50S ribosomal subunit. Interacts with L10 and the large rRNA to form the base of the stalk. L10 forms an elongated spine to which L12 dimers bind in a sequential fashion forming a multimeric L10(L12)X complex. In terms of processing, one or more lysine residues are methylated.

Forms part of the ribosomal stalk which helps the ribosome interact with GTP-bound translation factors. This chain is Large ribosomal subunit protein uL11, found in Delftia acidovorans (strain DSM 14801 / SPH-1).